We begin with the raw amino-acid sequence, 340 residues long: Glucokinase (340 aa).

Residue 17–22 (GDIGGT) coordinates ATP.

This sequence belongs to the bacterial glucokinase family.

The protein resides in the cytoplasm. It catalyses the reaction D-glucose + ATP = D-glucose 6-phosphate + ADP + H(+). This is Glucokinase from Allorhizobium ampelinum (strain ATCC BAA-846 / DSM 112012 / S4) (Agrobacterium vitis (strain S4)).